A 462-amino-acid polypeptide reads, in one-letter code: MDRNPSPPSSDDESAPEGDCIGDTIYSKHWFFSTLTRLIEAVSEDKSQEGQEDEAPGDLDEELEDEICKVWDMSMNEEVALFLQGFNAPEILLGVIAKSKCSRLTEMCVGILGNMSCFLEPCMAISTHQSLGEVLLLLLSDADPPTLLETSRLFLTCLSQADVAGTWVERFRKDPSVRENLCFIMSSSTNVDLLVKVGELLDRLFDMDEDLMLAWIRSDCAPRETSAVTENEDRAAPLEMVSCLLEAAKQLRSESPEGLEIYMHVLQLLTTADTGIQAIVQSPDGGEQTWDFLLDLTCNDLCQPNDPPLIVQEQKGILSSVLAVMSAMFVWRAEQGHKVEKSLPLISSLAQVLENLEECRKKCPESDAREGPDARHDNSHLQILKDVSCEFLSNILSELSKDSVLQGISLGHITERRCQCALRNLLPLYSTSVGTFLAAVGEADRSLADTLRRETPVRAEQT.

The tract at residues 1–21 (MDRNPSPPSSDDESAPEGDCI) is disordered.

The protein belongs to the SAAL1 family.

It localises to the nucleus. In terms of biological role, plays a role in promoting cell proliferation in response to pro-inflammatory stimuli. This Xenopus tropicalis (Western clawed frog) protein is Protein saal1 (saal1).